Reading from the N-terminus, the 301-residue chain is NADH-cytochrome b5 reductase 3 (301 aa).

Residue Gly-2 is the site of N-myristoyl glycine attachment. The FAD-binding FR-type domain maps to 40 to 152; the sequence is DIKYPLRLID…RGPNGLLVYQ (113 aa). The residue at position 42 (Lys-42) is an N6-acetyllysine. Tyr-43 carries the post-translational modification Phosphotyrosine. The residue at position 50 (Lys-50) is an N6-acetyllysine. Residues Arg-92, Pro-93, Tyr-94, Val-109, Lys-111, and Phe-114 each contribute to the FAD site. Residue Lys-120 is modified to N6-acetyllysine. Lys-126, Met-127, Ser-128, and Thr-185 together coordinate FAD.

Belongs to the flavoprotein pyridine nucleotide cytochrome reductase family. As to quaternary structure, component of a complex composed of cytochrome b5, NADH-cytochrome b5 reductase (CYB5R3) and MTARC2. Interacts with MTLN; the interaction is required to maintain cellular lipid composition and leads to stimulation of mitochondrial respiratory complex I activity. Requires FAD as cofactor.

It is found in the endoplasmic reticulum membrane. The protein localises to the mitochondrion outer membrane. The catalysed reaction is 2 Fe(III)-[cytochrome b5] + NADH = 2 Fe(II)-[cytochrome b5] + NAD(+) + H(+). Catalyzes the reduction of two molecules of cytochrome b5 using NADH as the electron donor. This Bos taurus (Bovine) protein is NADH-cytochrome b5 reductase 3 (CYB5R3).